The primary structure comprises 143 residues: Lutropin subunit beta (143 aa).

Residues 1–22 (MEMLQGLLLLWLLLLNVGGVWT) form the signal peptide. 6 disulfide bridges follow: cysteine 31–cysteine 79, cysteine 45–cysteine 94, cysteine 48–cysteine 132, cysteine 56–cysteine 110, cysteine 60–cysteine 112, and cysteine 115–cysteine 122. N-linked (GlcNAc...) asparagine glycosylation is present at asparagine 35.

Belongs to the glycoprotein hormones subunit beta family. In terms of assembly, heterodimer of a common alpha chain and a unique beta chain which confers biological specificity to thyrotropin, lutropin, follitropin and gonadotropin.

The protein localises to the secreted. Promotes spermatogenesis and ovulation by stimulating the testes and ovaries to synthesize steroids. The sequence is that of Lutropin subunit beta (LHB) from Felis catus (Cat).